Here is a 667-residue protein sequence, read N- to C-terminus: E3 ubiquitin-protein ligase Midline-1 (667 aa).

Residues C10–R60 form an RING-type zinc finger. Residues S92 and S96 each carry the phosphoserine modification. 2 consecutive B box-type zinc fingers follow at residues K116–I165 and G172–L212. Zn(2+) contacts are provided by C119, C122, C134, C137, C142, C145, H150, H159, C175, H178, C198, and H204. A coiled-coil region spans residues R205 to E264. The COS domain occupies L320–L379. The Fibronectin type-III domain maps to A381–Q484. Residues S471–P485 are compositionally biased toward polar residues. The segment at S471–S524 is disordered. Residues N482–H659 form the B30.2/SPRY domain. Positions V499 to E520 are enriched in basic and acidic residues. At S511 the chain carries Phosphoserine.

It belongs to the TRIM/RBCC family. Homodimer or heterodimer with MID2. Interacts with IGBP1.

It localises to the cytoplasm. The protein localises to the cytoskeleton. The catalysed reaction is S-ubiquitinyl-[E2 ubiquitin-conjugating enzyme]-L-cysteine + [acceptor protein]-L-lysine = [E2 ubiquitin-conjugating enzyme]-L-cysteine + N(6)-ubiquitinyl-[acceptor protein]-L-lysine.. Its function is as follows. Has E3 ubiquitin ligase activity towards IGBP1, promoting its monoubiquitination, which results in deprotection of the catalytic subunit of protein phosphatase PP2A, and its subsequent degradation by polyubiquitination. The chain is E3 ubiquitin-protein ligase Midline-1 (Mid1) from Mus spretus (Western Mediterranean mouse).